The following is a 422-amino-acid chain: MLDLSELKKKTIEDLLKIAEDLGVVSNGRMLKQEIIFHLMKKVVSDGGAAIGGGVVEILSDGFGFLRSPEANYAASGDDVYISAGQIKKFNLRTGDIVSGEIRAPSEKERYFTLVKAHSINFTDMAKLQRYVHFDDLIPLYPEERILLECNDPISVSKKDISMRVIDIVAPLGKGQRALIVAPPRAGKTIILQQIAHSISVNHPDIELIVLLIGERPEEVTDMCRSVKGEVVSSTFDEPGYRHVQLAEIVIEKAKRMVEHKKNVVILLDSITRLARAYNSVIPSSGKVLTGGVDSNALQRPKRFFGAARNIENGGSLTIIATALIETGSKMDEVIFEEFKGTGNCEIILDRKISDKRVYPAIDISKSGTRKEDMLIDSVCLKKVWLLRRLLSSMGSVEAMEFLRDKLLITKDNNEFFDMMNS.

The 76-residue stretch at 49–124 (AAIGGGVVEI…VKAHSINFTD (76 aa)) folds into the Rho RNA-BD domain. ATP contacts are provided by residues 173 to 178 (GKGQRA), 185 to 190 (RAGKTI), and Arg-216.

This sequence belongs to the Rho family. Homohexamer. The homohexamer assembles into an open ring structure.

Its function is as follows. Facilitates transcription termination by a mechanism that involves Rho binding to the nascent RNA, activation of Rho's RNA-dependent ATPase activity, and release of the mRNA from the DNA template. The polypeptide is Transcription termination factor Rho 1 (Ehrlichia chaffeensis (strain ATCC CRL-10679 / Arkansas)).